The chain runs to 503 residues: Maturase K (503 aa).

This sequence belongs to the intron maturase 2 family. MatK subfamily.

It localises to the plastid. The protein resides in the chloroplast. Functionally, usually encoded in the trnK tRNA gene intron. Probably assists in splicing its own and other chloroplast group II introns. The protein is Maturase K of Kunzea pulchella (Red kunzea).